Reading from the N-terminus, the 1718-residue chain is PR domain zinc finger protein 2 (1718 aa).

The SET domain occupies 28–141 (EEVRLFPSAV…PGEELLVWYN (114 aa)). The interval 155 to 335 (ERASARSKRS…TSEETLEDCS (181 aa)) is disordered. A compositionally biased stretch (basic residues) spans 159–173 (ARSKRSSPKSRKGKK). Positions 189-202 (QLKTSEPDFTSANM) are enriched in polar residues. Residues 204-216 (DSAEGPKEDEEKP) show a composition bias toward basic and acidic residues. Acidic residues predominate over residues 265–297 (DLGEEEEEEEEEDEEEEEDDDDDELEDEGEEEA). Residues 294-316 (EEEASMPNENSVKEPEIRCDEKP) form a retinoblastoma protein binding region. Residues 304 to 327 (SVKEPEIRCDEKPEDLLEEPKTTS) are compositionally biased toward basic and acidic residues. A Glycyl lysine isopeptide (Lys-Gly) (interchain with G-Cter in SUMO2) cross-link involves residue Lys347. 2 consecutive C2H2-type zinc fingers follow at residues 360–382 (FPCQ…MHIH) and 390–412 (FKCK…ERRH). The tract at residues 405 to 457 (RRRHERRHEAGLKRKPSQTLQPSEDLADGKASGENVASKDDSSPPSLGPDCLI) is disordered. Ser421 bears the Phosphoserine mark. A C2H2-type 3 zinc finger spans residues 483–506 (HPCKYCKKVFGTHTNMRRHQRRVH). 2 disordered regions span residues 513-550 (KGVR…EGEA) and 622-660 (EDLP…DPMV). Ser643 carries the post-translational modification Phosphoserine. Residues Lys651, Lys690, and Lys692 each participate in a glycyl lysine isopeptide (Lys-Gly) (interchain with G-Cter in SUMO2) cross-link. Residues 729 to 797 (TSSRFKRRTS…GRDERETVSP (69 aa)) are disordered. A compositionally biased stretch (low complexity) spans 738-748 (SSPPSSPQHSP). At Ser743 the chain carries Phosphoserine. Lys774 participates in a covalent cross-link: Glycyl lysine isopeptide (Lys-Gly) (interchain with G-Cter in SUMO2). Ser781, Ser785, and Ser796 each carry phosphoserine. Glycyl lysine isopeptide (Lys-Gly) (interchain with G-Cter in SUMO2) cross-links involve residues Lys866 and Lys879. The interval 903–1083 (VENPADGTRS…SPPPLSAISS (181 aa)) is disordered. Residues 951 to 969 (LQTPSLSSGQLPPLLIPTD) are compositionally biased toward low complexity. Short sequence motifs (SH3-binding) lie at residues 970–979 (PSSPPPCPPV) and 985–998 (PPPP…LPAP). Residues 970-997 (PSSPPPCPPVLTVATPPPPLLPTVPLPA) show a composition bias toward pro residues. Residues 1018-1027 (SPLPILSPTV) show a composition bias toward low complexity. Over residues 1028–1038 (SPSPSPIPPVE) the composition is skewed to pro residues. Positions 1028–1052 (SPSPSPIPPVEPLMSAASPGPPTLS) match the SH3-binding motif. A compositionally biased stretch (low complexity) spans 1042-1072 (SAASPGPPTLSSSSSSSSSSSSFSSSSSSSS). 3 consecutive C2H2-type zinc fingers follow at residues 1134-1156 (FVCN…LSIH), 1162-1185 (FKCE…FLLH), and 1191-1214 (FVCS…RDLH). Residues Lys1147 and Lys1151 each participate in a glycyl lysine isopeptide (Lys-Gly) (interchain with G-Cter in SUMO2) cross-link. The segment at 1244-1265 (HMQSLPEDPLETSKEEEELNDS) is disordered. The segment covering 1251-1265 (DPLETSKEEEELNDS) has biased composition (acidic residues). Residues Lys1257 and Lys1281 each participate in a glycyl lysine isopeptide (Lys-Gly) (interchain with G-Cter in SUMO2) cross-link. A C2H2-type 7; atypical zinc finger spans residues 1333-1355 (IRCTKCGKGVDNMPELHKHILAC). The C2H2-type 8; atypical zinc-finger motif lies at 1455-1478 (HICPYCNREFTYIGSLNKHAAFSC). Disordered stretches follow at residues 1478–1576 (CPKK…LRNS), 1589–1612 (GKKP…RSLH), and 1625–1652 (KSTL…VTRS). Positions 1486–1498 (PKKKVSHSSKKGG) are enriched in basic residues. Low complexity predominate over residues 1499–1511 (HSSPASSDKNSNS). Polar residues-rich tracts occupy residues 1525–1556 (QSMQ…SKQN) and 1599–1608 (HSAQLSSKTS). A compositionally biased stretch (basic and acidic residues) spans 1635–1645 (DRFNIKSRERS).

The protein belongs to the class V-like SAM-binding methyltransferase superfamily. Binds to the retinoblastoma protein (RB). Interacts with GATA3. As to expression, highly expressed in retinoblastoma cell lines and in brain tumors. Also expressed in a number of other cell lines and in brain, heart, skeletal muscle, liver and spleen. Isoform 1 is expressed in testis at much higher level than isoform 3.

It is found in the nucleus. It carries out the reaction L-lysyl(9)-[histone H3] + 3 S-adenosyl-L-methionine = N(6),N(6),N(6)-trimethyl-L-lysyl(9)-[histone H3] + 3 S-adenosyl-L-homocysteine + 3 H(+). In terms of biological role, S-adenosyl-L-methionine-dependent histone methyltransferase that specifically methylates 'Lys-9' of histone H3. May function as a DNA-binding transcription factor. Binds to the macrophage-specific TPA-responsive element (MTE) of the HMOX1 (heme oxygenase 1) gene and may act as a transcriptional activator of this gene. This is PR domain zinc finger protein 2 (PRDM2) from Homo sapiens (Human).